We begin with the raw amino-acid sequence, 290 residues long: MTAATHTKAQVLAAALPWLKQLHGKIVVVKYGGNAMTDDTLKAAFAADMVFLRNCGVHPVVVHGGGLQISAMLKRLGIPGDFRGGFRVTTPEVLDVARMVLFGQVGRELVGLINAHGPYAVGITGEDAHLFTAVRRDVVVDGVATDIGLVGDVEHVNTEAVRDLIAAGRIPVVSTIAPDANGVVHNINADTAAAALAAALSAEKLLMLTDIEGLYTDWPDRNSLVSQINTDELTELLPTLEAGMVPKIEACLRAVTEGVPSAHVIDGRVEHCVLVELFTDEGTGTKVVNP.

Residues 65–66 (GG), R87, and N186 each bind substrate.

The protein belongs to the acetylglutamate kinase family. ArgB subfamily.

The protein resides in the cytoplasm. The enzyme catalyses N-acetyl-L-glutamate + ATP = N-acetyl-L-glutamyl 5-phosphate + ADP. It participates in amino-acid biosynthesis; L-arginine biosynthesis; N(2)-acetyl-L-ornithine from L-glutamate: step 2/4. Its function is as follows. Catalyzes the ATP-dependent phosphorylation of N-acetyl-L-glutamate. The protein is Acetylglutamate kinase of Mycobacterium sp. (strain KMS).